The sequence spans 305 residues: MLDTSIQALINKWQKYLVLQRNYSNHTVISYNNDLKHFLEFMNYYNSELVTINHIKTADIRLIRSWLAKRNCDNFAASSISRGLSAVKNFYRFLEKTTQLNSHIIFSIKSPKKTKLLPKALSEDDVVISLEHIEEYGNIKWVELRNKALLVLIYASGLRISEALSITKLHLQNLEFIRIIGKGSKERIIPWLPIAKNLITQYLEILPYKLGDNEPIFRGKQGKKLQPPVFNRELIKLKHFYGLPQHLTAHSFRHSFASHLLEHGADLRSLQALLGHKSLSTTQNYTKTSIKHLEAVYTTAYPIKK.

Residues 4 to 95 enclose the Core-binding (CB) domain; that stretch reads TSIQALINKW…AVKNFYRFLE (92 aa). The Tyr recombinase domain maps to 116–298; the sequence is LLPKALSEDD…SIKHLEAVYT (183 aa). Catalysis depends on residues arginine 159, lysine 182, histidine 250, arginine 253, and histidine 276. Tyrosine 285 serves as the catalytic O-(3'-phospho-DNA)-tyrosine intermediate.

It belongs to the 'phage' integrase family. XerC subfamily. As to quaternary structure, forms a cyclic heterotetrameric complex composed of two molecules of XerC and two molecules of XerD.

It is found in the cytoplasm. Site-specific tyrosine recombinase, which acts by catalyzing the cutting and rejoining of the recombining DNA molecules. The XerC-XerD complex is essential to convert dimers of the bacterial chromosome into monomers to permit their segregation at cell division. It also contributes to the segregational stability of plasmids. The sequence is that of Tyrosine recombinase XerC from Rickettsia rickettsii (strain Iowa).